Consider the following 404-residue polypeptide: Ribosomal RNA large subunit methyltransferase F (404 aa).

Basic residues-rich tracts occupy residues 1–10 and 18–29; these read MTKHSQKQNR and QTRRKKPAGKLK. Disordered regions lie at residues 1–54, 156–177, and 289–308; these read MTKH…HERN, GTRQNVPYASKPESSAPKQRYK, and RAAKGHKPEPAASKAKPDAN. Over residues 30 to 54 the composition is skewed to basic and acidic residues; that stretch reads AKSEAKLDTRGKPETTEKKGLHERN. A compositionally biased stretch (polar residues) spans 157–172; the sequence is TRQNVPYASKPESSAP.

Belongs to the methyltransferase superfamily. METTL16/RlmF family.

It is found in the cytoplasm. The catalysed reaction is adenosine(1618) in 23S rRNA + S-adenosyl-L-methionine = N(6)-methyladenosine(1618) in 23S rRNA + S-adenosyl-L-homocysteine + H(+). Functionally, specifically methylates the adenine in position 1618 of 23S rRNA. This is Ribosomal RNA large subunit methyltransferase F from Shewanella sediminis (strain HAW-EB3).